Reading from the N-terminus, the 580-residue chain is Acyl-coenzyme A synthetase ACSM4, mitochondrial (580 aa).

The N-terminal 22 residues, Met1–Arg22, are a transit peptide targeting the mitochondrion. Residues Thr229–Lys237, Glu368–Thr373, Asp455, Arg470, and Lys566 each bind ATP.

This sequence belongs to the ATP-dependent AMP-binding enzyme family. Mg(2+) is required as a cofactor. Requires Mn(2+) as cofactor.

Its subcellular location is the mitochondrion. It carries out the reaction a medium-chain fatty acid + ATP + CoA = a medium-chain fatty acyl-CoA + AMP + diphosphate. It catalyses the reaction hexanoate + ATP + CoA = hexanoyl-CoA + AMP + diphosphate. The enzyme catalyses octanoate + ATP + CoA = octanoyl-CoA + AMP + diphosphate. The catalysed reaction is decanoate + ATP + CoA = decanoyl-CoA + AMP + diphosphate. It carries out the reaction dodecanoate + ATP + CoA = dodecanoyl-CoA + AMP + diphosphate. Catalyzes the activation of fatty acids by CoA to produce an acyl-CoA, the first step in fatty acid metabolism. Capable of activating medium-chain fatty acids with a preference for C6-12 fatty acids. The chain is Acyl-coenzyme A synthetase ACSM4, mitochondrial (ACSM4) from Homo sapiens (Human).